The primary structure comprises 373 residues: Leucoanthocyanidin dioxygenase 2 (373 aa).

The 100-residue stretch at Leu-216–Pro-315 folds into the Fe2OG dioxygenase domain. Fe cation is bound by residues His-240, Asp-242, and His-296. Arg-306 serves as a coordination point for 2-oxoglutarate.

Belongs to the iron/ascorbate-dependent oxidoreductase family. L-ascorbate serves as cofactor. The cofactor is Fe(2+).

The enzyme catalyses a (2R,3S,4S)-leucoanthocyanidin + 2-oxoglutarate + O2 = a 4-H-anthocyanidin with a 3-hydroxy group + succinate + CO2 + 2 H2O. It functions in the pathway pigment biosynthesis; anthocyanin biosynthesis. Involved in anthocyanin and protoanthocyanidin biosynthesis by catalyzing the oxidation of leucoanthocyanidins into anthocyanidins. This chain is Leucoanthocyanidin dioxygenase 2, found in Oryza sativa subsp. japonica (Rice).